The primary structure comprises 134 residues: Small ribosomal subunit protein uS8c (134 aa).

It belongs to the universal ribosomal protein uS8 family. Part of the 30S ribosomal subunit.

It localises to the plastid. The protein resides in the chloroplast. Functionally, one of the primary rRNA binding proteins, it binds directly to 16S rRNA central domain where it helps coordinate assembly of the platform of the 30S subunit. The chain is Small ribosomal subunit protein uS8c (rps8) from Helianthus annuus (Common sunflower).